We begin with the raw amino-acid sequence, 175 residues long: Bifunctional protein PyrR (175 aa).

Substrate contacts are provided by residues 40–41 (TR), R85, 102–110 (DDVLYTGRT), R135, and V159. The PRPP-binding signature appears at 98 to 110 (VIIIDDVLYTGRT).

The protein belongs to the purine/pyrimidine phosphoribosyltransferase family. PyrR subfamily. As to quaternary structure, homodimer and homohexamer; in equilibrium.

The catalysed reaction is UMP + diphosphate = 5-phospho-alpha-D-ribose 1-diphosphate + uracil. Regulates transcriptional attenuation of the pyrimidine nucleotide (pyr) operon by binding in a uridine-dependent manner to specific sites on pyr mRNA. This disrupts an antiterminator hairpin in the RNA and favors formation of a downstream transcription terminator, leading to a reduced expression of downstream genes. Its function is as follows. Also displays a weak uracil phosphoribosyltransferase activity which is not physiologically significant. The chain is Bifunctional protein PyrR from Staphylococcus saprophyticus subsp. saprophyticus (strain ATCC 15305 / DSM 20229 / NCIMB 8711 / NCTC 7292 / S-41).